The following is a 250-amino-acid chain: Mycofactocin precursor peptide peptidase (250 aa).

Positions 38, 40, 49, 127, and 166 each coordinate a divalent metal cation.

This sequence belongs to the creatininase superfamily. In terms of assembly, homooctamer. Requires Fe(2+) as cofactor. Zn(2+) is required as a cofactor.

The enzyme catalyses [mycofactocin precursor peptide]-C-terminal glycyl-N-{5-[(4-hydroxyphenyl)methyl]-4,4-dimethyl-2-oxopyrrolidin-3-yl}acetamide + H2O = [mycofactocin precursor peptide]-C-terminal glycine + 3-amino-5-[(4-hydroxyphenyl)methyl]-4,4-dimethyl-2-pyrrolidin-2-one. In terms of biological role, peptidase involved in the biosynthesis of the enzyme cofactor mycofactocin (MFT). Catalyzes cleavage of the MftC-modified MftA peptide to liberate its final two residues, which consist of a cross-linked valine-decarboxylated tyrosine dipeptide (named 3-amino-5-[(4-hydroxyphenyl)methyl]-4,4-dimethyl-2-pyrrolidin-2-one or ADHP). The chain is Mycofactocin precursor peptide peptidase from Mycobacterium ulcerans (strain Agy99).